A 131-amino-acid chain; its full sequence is Antiholin (131 aa).

The Periplasmic portion of the chain corresponds to 1–15 (MTMIAWMQHFLETDE). Cytoplasmic-facing segments span residues 1–52 (MTMI…SSFK) and 39–50 (FAKLNPNIKFSS). A helical transmembrane segment spans residues 16–38 (TKLIYWLTFLMVCMVVDTVLGVL). Residues 53 to 75 (IKTGVLIKVSEMILALLAVPFAV) form a helical membrane-spanning segment. The Periplasmic segment spans residues 76 to 78 (PFP). Residues 79–101 (AGLPLLYTVYTALCVSEIYSIFG) traverse the membrane as a helical segment. Residues 102–131 (HLRLVDDKSDFLEILENFFKRTSGKNKEDK) are Cytoplasmic-facing.

Belongs to the bacteriophage holin family. phi29likevirus holin subfamily. In terms of assembly, homomultimer. Interacts with isoform Antiholin; this interaction blocks the holin homomultimerization and delays host cell lysis.

The protein resides in the host cell inner membrane. Its function is as follows. Accumulates harmlessly in the cytoplasmic membrane until it reaches a critical concentration that triggers the formation of micron-scale pores (holes) causing host cell membrane disruption and endolysin escape into the periplasmic space. Determines the precise timing of host cell lysis. Participates with the endolysin and spanin proteins in the sequential events which lead to the programmed host cell lysis releasing the mature viral particles from the host cell. In terms of biological role, counteracts the aggregation of the holin molecules and thus of pore formation. The chain is Antiholin (14) from Bacillus subtilis (Bacteriophage PZA).